We begin with the raw amino-acid sequence, 818 residues long: Probable helicase MAGATAMA 3 (818 aa).

Positions 259-559 (NKSQKEAIDV…KMLKTQYRMH (301 aa)) constitute a UvrD-like helicase ATP-binding domain. 280–287 (GPPGTGKT) is a binding site for ATP. 2 stretches are compositionally biased toward acidic residues: residues 781–790 (PDAPLYEDES) and 798–818 (GDDD…AGED). Residues 781–818 (PDAPLYEDESLPVAPYGGDDDFGDGDADQDDVAMAGED) are disordered.

The protein belongs to the helicase family. As to expression, expressed in flowers, siliques, leaves, roots and shoot apex.

The protein localises to the nucleus. Probable helicase that may regulate RNA molecules involved in nucleolar organization and pollen tube guidance. In Arabidopsis thaliana (Mouse-ear cress), this protein is Probable helicase MAGATAMA 3 (MAA3).